A 360-amino-acid chain; its full sequence is Phenylalanine--tRNA ligase alpha subunit (360 aa).

Residue E260 participates in Mg(2+) binding.

It belongs to the class-II aminoacyl-tRNA synthetase family. Phe-tRNA synthetase alpha subunit type 1 subfamily. Tetramer of two alpha and two beta subunits. Mg(2+) serves as cofactor.

The protein localises to the cytoplasm. It carries out the reaction tRNA(Phe) + L-phenylalanine + ATP = L-phenylalanyl-tRNA(Phe) + AMP + diphosphate + H(+). This Rhodopseudomonas palustris (strain ATCC BAA-98 / CGA009) protein is Phenylalanine--tRNA ligase alpha subunit.